We begin with the raw amino-acid sequence, 110 residues long: Thioredoxin (110 aa).

A Thioredoxin domain is found at 2-110; sequence SALLVEIDKD…IDAMIAKHVG (109 aa). Residues cysteine 33 and cysteine 36 are joined by a disulfide bond.

The protein belongs to the thioredoxin family.

Functionally, participates in various redox reactions through the reversible oxidation of its active center dithiol to a disulfide and catalyzes dithiol-disulfide exchange reactions. This is Thioredoxin (trxA) from Peptoclostridium acidaminophilum (Eubacterium acidaminophilum).